The sequence spans 1657 residues: Thrombospondin type-1 domain-containing protein 7A (1657 aa).

A signal peptide spans 1-47 (MGLQARRWASGSRGAAGPRRGVLQLLPLPLPLPLLLLLLLRPGAGRA). Residues 48 to 1607 (AAQGEAEAPT…FGPDGRLKTW (1560 aa)) are Extracellular-facing. TSP type-1 domains lie at 57-116 (TLYL…KVCD), 120-192 (ELYD…IPCQ), and 194-247 (DCIV…SPCE). N234 is a glycosylation site (N-linked (GlcNAc...) asparagine). The segment at 265–311 (MPHSRQVRQARRRGKNKEREKDRSKGVKDPEARELIKKKRNRNRQNR) is disordered. A coiled-coil region spans residues 267–315 (HSRQVRQARRRGKNKEREKDRSKGVKDPEARELIKKKRNRNRQNRQENK). The span at 269-280 (RQVRQARRRGKN) shows a compositional bias: basic residues. The span at 281-299 (KEREKDRSKGVKDPEAREL) shows a compositional bias: basic and acidic residues. Over residues 300 to 309 (IKKKRNRNRQ) the composition is skewed to basic residues. N-linked (GlcNAc...) asparagine glycosylation occurs at N332. TSP type-1 domains are found at residues 360-416 (ECQV…LSQG), 423-510 (ATYG…IPCP), 512-574 (ECEV…PACY), 634-695 (DCVL…HPCT), 696-769 (VYHW…LPCK), 771-831 (DCIV…QACQ), 832-904 (SYRW…IPCQ), 906-959 (DCQL…CPCD), 960-1033 (KYNA…IPCP), 1035-1095 (DCKL…SDCN), 1096-1163 (QYLW…LPCP), 1166-1220 (CVIS…KNCY), 1221-1284 (HYDY…VECP), 1286-1341 (NCQL…KPCY), 1342-1412 (RWQY…QPCP), and 1414-1475 (DCYL…GQCY). 3 cysteine pairs are disulfide-bonded: C435–C505, C455–C509, and C466–C494. Residue N450 is glycosylated (N-linked (GlcNAc...) asparagine). N500 is a glycosylation site (N-linked (GlcNAc...) asparagine). 2 disulfide bridges follow: C635–C677 and C646–C650. N-linked (GlcNAc...) asparagine glycosylation is present at N679. 7 cysteine pairs are disulfide-bonded: C689-C694, C707-C764, C728-C768, C739-C752, C772-C814, C783-C787, and C824-C830. N-linked (GlcNAc...) asparagine glycosylation is present at N717. Residue N968 is glycosylated (N-linked (GlcNAc...) asparagine). 6 cysteine pairs are disulfide-bonded: C972–C1028, C994–C1032, C1005–C1018, C1036–C1073, C1047–C1051, and C1090–C1094. An N-linked (GlcNAc...) asparagine glycan is attached at N1043. N1182 carries an N-linked (GlcNAc...) asparagine glycan. C1213 and C1219 are oxidised to a cystine. Residue N1225 is glycosylated (N-linked (GlcNAc...) asparagine). Disulfide bonds link C1232-C1279, C1240-C1283, C1251-C1264, C1287-C1325, C1298-C1302, C1335-C1340, C1351-C1407, C1358-C1411, C1369-C1388, C1415-C1459, C1426-C1430, and C1469-C1474. N-linked (GlcNAc...) asparagine glycosylation occurs at N1276. N-linked (GlcNAc...) asparagine glycosylation is present at N1366. Residues N1500 and N1547 are each glycosylated (N-linked (GlcNAc...) asparagine). The tract at residues 1570–1591 (DVKTSRAVHPTQPSSNPAGRGR) is disordered. Residues 1608 to 1628 (VYGVAAGAFVLLIFIVSMIYL) traverse the membrane as a helical segment. The Cytoplasmic segment spans residues 1629-1657 (ACKKPKKPQRRQNNRLKPLTLAYDGDADM).

Proteolytic cleavage in the extracellular region generates a 210 kDa soluble form. In terms of processing, extensively N-glycosylated. In terms of tissue distribution, detected on kidney podocytes along the glomerular capillary wall (at protein level).

The protein resides in the cell membrane. The protein localises to the cell projection. It localises to the secreted. Plays a role in actin cytoskeleton rearrangement. Its function is as follows. The soluble form promotes endothelial cell migration and filopodia formation during sprouting angiogenesis via a FAK-dependent mechanism. The polypeptide is Thrombospondin type-1 domain-containing protein 7A (THSD7A) (Homo sapiens (Human)).